A 148-amino-acid polypeptide reads, in one-letter code: MADESNTGPVAAAEAVAETQAPAGKRKSSSRRQRTAAGQVAESKTTAKPKRYSETERADKLNLIEAEVAQGNSTLKDAIKSAGISEQTYYVWKKSAKPADRKPEESVVAGDDLADLIQLDKENLRLRNLLSDKLRAENAELRKRLGLD.

The disordered stretch occupies residues Met-1–Ala-58. Low complexity predominate over residues Thr-7–Ala-23. The span at Gly-24 to Arg-34 shows a compositional bias: basic residues.

Belongs to the SyrB family.

In terms of biological role, responsible for the repression of SyrM activity. The polypeptide is Probable transcriptional regulator SyrB (syrB) (Sinorhizobium fredii (strain NBRC 101917 / NGR234)).